We begin with the raw amino-acid sequence, 201 residues long: Adapter protein MecA 1 (201 aa).

It belongs to the MecA family. As to quaternary structure, homodimer.

Its function is as follows. Enables the recognition and targeting of unfolded and aggregated proteins to the ClpC protease or to other proteins involved in proteolysis. Acts negatively in the development of competence by binding ComK and recruiting it to the ClpCP protease. When overexpressed, inhibits sporulation. Also involved in Spx degradation by ClpC. The protein is Adapter protein MecA 1 (mecA1) of Halalkalibacterium halodurans (strain ATCC BAA-125 / DSM 18197 / FERM 7344 / JCM 9153 / C-125) (Bacillus halodurans).